The chain runs to 1079 residues: Error-prone DNA polymerase (1079 aa).

The protein belongs to the DNA polymerase type-C family. DnaE2 subfamily.

It localises to the cytoplasm. It catalyses the reaction DNA(n) + a 2'-deoxyribonucleoside 5'-triphosphate = DNA(n+1) + diphosphate. In terms of biological role, DNA polymerase involved in damage-induced mutagenesis and translesion synthesis (TLS). It is not the major replicative DNA polymerase. This chain is Error-prone DNA polymerase, found in Ralstonia pickettii (strain 12J).